The sequence spans 274 residues: tRNA uridine(34) hydroxylase (274 aa).

One can recognise a Rhodanese domain in the interval 121-217 (SRSDVYTIDT…YFKSTKNTNN (97 aa)). Cys177 (cysteine persulfide intermediate) is an active-site residue.

The protein belongs to the TrhO family.

It catalyses the reaction uridine(34) in tRNA + AH2 + O2 = 5-hydroxyuridine(34) in tRNA + A + H2O. Its function is as follows. Catalyzes oxygen-dependent 5-hydroxyuridine (ho5U) modification at position 34 in tRNAs. The chain is tRNA uridine(34) hydroxylase from Ehrlichia canis (strain Jake).